We begin with the raw amino-acid sequence, 296 residues long: Pyridoxine/pyridoxal/pyridoxamine kinase (296 aa).

2 residues coordinate substrate: serine 23 and histidine 59. Aspartate 125 contributes to the ATP binding site. Tyrosine 136 provides a ligand contact to Mg(2+). ATP is bound by residues threonine 157, glutamate 162, threonine 195, 222 to 225 (HQRV), and threonine 232. Glutamate 162 contacts Mg(2+). Aspartate 234 is a substrate binding site.

Belongs to the pyridoxine kinase family. PdxK subfamily. Homodimer. Mg(2+) is required as a cofactor.

The enzyme catalyses pyridoxal + ATP = pyridoxal 5'-phosphate + ADP + H(+). It catalyses the reaction pyridoxine + ATP = pyridoxine 5'-phosphate + ADP + H(+). It carries out the reaction pyridoxamine + ATP = pyridoxamine 5'-phosphate + ADP + H(+). The protein operates within cofactor metabolism; pyridoxal 5'-phosphate salvage; pyridoxal 5'-phosphate from pyridoxal: step 1/1. Its pathway is cofactor metabolism; pyridoxal 5'-phosphate salvage; pyridoxine 5'-phosphate from pyridoxine: step 1/1. It functions in the pathway cofactor metabolism; pyridoxal 5'-phosphate salvage; pyridoxamine 5'-phosphate from pyridoxamine: step 1/1. Functionally, B6-vitamer kinase involved in the salvage pathway of pyridoxal 5'-phosphate (PLP). Catalyzes the phosphorylation of pyridoxine (PN), pyridoxal (PL), and pyridoxamine (PM), forming their respective 5'-phosphorylated esters, i.e. PNP, PLP and PMP. The polypeptide is Pyridoxine/pyridoxal/pyridoxamine kinase (Bordetella avium (strain 197N)).